The sequence spans 268 residues: Shikimate dehydrogenase (NADP(+)) (268 aa).

Shikimate-binding positions include 14 to 16 and Thr61; that span reads SKS. The active-site Proton acceptor is Lys65. The shikimate site is built by Asn86 and Asp102. NADP(+)-binding positions include 126-130, 149-154, and Met213; these read GAGGA and NRTFLK. Tyr215 provides a ligand contact to shikimate. Gly238 contacts NADP(+).

The protein belongs to the shikimate dehydrogenase family. Homodimer.

The catalysed reaction is shikimate + NADP(+) = 3-dehydroshikimate + NADPH + H(+). Its pathway is metabolic intermediate biosynthesis; chorismate biosynthesis; chorismate from D-erythrose 4-phosphate and phosphoenolpyruvate: step 4/7. Its function is as follows. Involved in the biosynthesis of the chorismate, which leads to the biosynthesis of aromatic amino acids. Catalyzes the reversible NADPH linked reduction of 3-dehydroshikimate (DHSA) to yield shikimate (SA). This is Shikimate dehydrogenase (NADP(+)) from Haemophilus influenzae (strain PittGG).